The sequence spans 382 residues: Protein MSN1 (382 aa).

The leucine-zipper stretch occupies residues leucine 12–leucine 26. Composition is skewed to polar residues over residues threonine 104–threonine 114 and asparagine 122–asparagine 138. Disordered regions lie at residues threonine 104–asparagine 138 and asparagine 155–glutamine 260. Residues serine 162–asparagine 180 show a composition bias toward low complexity. Polar residues-rich tracts occupy residues proline 181–valine 198 and asparagine 207–isoleucine 221. A compositionally biased stretch (low complexity) spans serine 222–serine 231. The segment covering proline 232–valine 253 has biased composition (polar residues). The Nuclear localization signal motif lies at glycine 266–arginine 271.

The protein localises to the nucleus. In terms of biological role, may function as a transcriptional activator. Increased dosage of MSN1 restores invertase expression in yeast mutants defective in the SNF1 protein kinase, and msn1 disruption reduced derepression of invertase in the wild-type. May affect SUC2 expression. Expression of MSN1 enhances growth in iron-limiting conditions. In Saccharomyces cerevisiae (strain ATCC 204508 / S288c) (Baker's yeast), this protein is Protein MSN1 (MSN1).